A 432-amino-acid polypeptide reads, in one-letter code: Gamma-glutamyl phosphate reductase (432 aa).

It belongs to the gamma-glutamyl phosphate reductase family.

It is found in the cytoplasm. The catalysed reaction is L-glutamate 5-semialdehyde + phosphate + NADP(+) = L-glutamyl 5-phosphate + NADPH + H(+). The protein operates within amino-acid biosynthesis; L-proline biosynthesis; L-glutamate 5-semialdehyde from L-glutamate: step 2/2. In terms of biological role, catalyzes the NADPH-dependent reduction of L-glutamate 5-phosphate into L-glutamate 5-semialdehyde and phosphate. The product spontaneously undergoes cyclization to form 1-pyrroline-5-carboxylate. The chain is Gamma-glutamyl phosphate reductase from Methylorubrum populi (strain ATCC BAA-705 / NCIMB 13946 / BJ001) (Methylobacterium populi).